A 785-amino-acid chain; its full sequence is Gamma-interferon-inducible protein 16 (785 aa).

One can recognise a Pyrin domain in the interval 5–92; sequence YKNIVLLKGL…KKEKLKAKGL (88 aa). An N6-acetyllysine modification is found at Lys45. Positions 88-99 are enriched in basic residues; that stretch reads KAKGLAPSRKRK. The tract at residues 88 to 196 is disordered; that stretch reads KAKGLAPSRK…TVAKCQATPR (109 aa). Ser95 is subject to Phosphoserine. A Nuclear localization signal motif is present at residues 96 to 100; the sequence is RKRKK. Lys99 is subject to N6-acetyllysine. Residues 104–114 are compositionally biased toward low complexity; sequence AASPAPSTSST. Ser106 is subject to Phosphoserine. Lys116 participates in a covalent cross-link: Glycyl lysine isopeptide (Lys-Gly) (interchain with G-Cter in SUMO2). N6-acetyllysine; alternate is present on Lys128. Residue Lys128 forms a Glycyl lysine isopeptide (Lys-Gly) (interchain with G-Cter in SUMO2); alternate linkage. 3 short sequence motifs (nuclear localization signal) span residues 128–131, 134–136, and 140–143; these read KRKK, KEK, and KGSK. Over residues 166-182 the composition is skewed to low complexity; sequence SPSPKTSSSAPPNTSST. Phosphoserine occurs at positions 168 and 174. The segment at 192-393 is interaction with TP53 C-terminus; it reads QATPRRSVLQ…SFIQIKKKTN (202 aa). The HIN-200 1 domain maps to 193-393; the sequence is ATPRRSVLQK…SFIQIKKKTN (201 aa). Residue Lys214 is modified to N6-acetyllysine. A disordered region spans residues 388 to 442; the sequence is IKKKTNPRNNDPKSMKLPQEQSQLPNPSEAGTTFPESHLWTPQMPPTTPSSSFFT. The segment covering 406-422 has biased composition (polar residues); sequence QEQSQLPNPSEAGTTFP. Lys444 and Lys451 each carry N6-acetyllysine. In terms of domain architecture, HIN-200 2 spans 566-765; sequence EVSIEDSAQS…SHIKVIKTRK (200 aa). Residues 571 to 766 are interaction with TP53 core domain; that stretch reads DSAQSDLKEV…HIKVIKTRKN (196 aa). Ser575 carries the post-translational modification Phosphoserine. Residues Lys598 and Lys614 each carry the N6-acetyllysine modification. Lys683 is covalently cross-linked (Glycyl lysine isopeptide (Lys-Gly) (interchain with G-Cter in SUMO2)). Ser780 carries the post-translational modification Phosphoserine.

It belongs to the HIN-200 family. As to quaternary structure, forms homooligomers. Interacts with TMEM173, AIM2, PYCARD and CASP1. Interacts with BRCA1, TP53, E2F1, RB1 and SP1. Interacts with MTA1. Interacts with MTA1. Interacts with PYDC5. In terms of processing, lysine acetylation in the multipartite nuclear localization signal (NLS) regulates the subcellular location. Phosphorylated on Ser and Thr.

The protein resides in the nucleus. It is found in the cytoplasm. Functionally, binds double-stranded DNA. Binds preferentially to supercoiled DNA and cruciform DNA structures. Seems to be involved in transcriptional regulation. May function as a transcriptional repressor. Could have a role in the regulation of hematopoietic differentiation through activation of unknown target genes. Controls cellular proliferation by modulating the functions of cell cycle regulatory factors including p53/TP53 and the retinoblastoma protein. May be involved in TP53-mediated transcriptional activation by enhancing TP53 sequence-specific DNA binding and modulating TP53 phosphorylation status. Seems to be involved in energy-level-dependent activation of the ATM/ AMPK/TP53 pathway coupled to regulation of autophagy. May be involved in regulation of TP53-mediated cell death also involving BRCA1. May be involved in the senescence of prostate epithelial cells. Involved in innate immune response by recognizing viral dsDNA in the cytosol and probably in the nucleus. After binding to viral DNA in the cytoplasm recruits TMEM173/STING and mediates the induction of IFN-beta. Has anti-inflammatory activity and inhibits the activation of the AIM2 inflammasome, probably via association with AIM2. Proposed to bind viral DNA in the nucleus and to induce the formation of nuclear caspase-1-activating inflammasome formation via association with PYCARD. Inhibits replication of herpesviruses probably by interfering with promoter recruitment of members of the Sp1 family of transcription factors. The polypeptide is Gamma-interferon-inducible protein 16 (IFI16) (Pongo abelii (Sumatran orangutan)).